Reading from the N-terminus, the 210-residue chain is Transcription factor ALC (210 aa).

Positions 1–49 (MGDSDVGDRLPPPSSSDELSSFLRQILSRTPTAQPSSPPKSTNVSSAET) are disordered. Residues 27-48 (LSRTPTAQPSSPPKSTNVSSAE) are compositionally biased toward polar residues. In terms of domain architecture, bHLH spans 93–142 (IDAQFHNLSEKKRRSKINEKMKALQKLIPNSNKTDKASMLDEAIEYLKQL).

Homodimer. As to expression, expressed constitutively in roots, leaves, stems, and flowers. Confined to the valve margins of the silique.

It localises to the nucleus. Functionally, required for the dehiscence of fruit, especially for the separation of the valve cells from the replum. Promotes the differentiation of a strip of labile nonlignified cells sandwiched between layers of lignified cells. In Arabidopsis thaliana (Mouse-ear cress), this protein is Transcription factor ALC (ALC).